We begin with the raw amino-acid sequence, 485 residues long: WD repeat-containing protein 13 (485 aa).

Phosphoserine occurs at positions 70, 74, and 79. R114 bears the Asymmetric dimethylarginine; alternate mark. An Omega-N-methylarginine; alternate modification is found at R114. WD repeat units follow at residues 170–210, 215–254, 302–341, 406–446, and 451–484; these read HVDE…PTVL, GHTR…CIRE, KLTG…GKLT, HPVR…KAAV, and GHSA…RREQ.

The protein localises to the nucleus. This is WD repeat-containing protein 13 (WDR13) from Pongo abelii (Sumatran orangutan).